Consider the following 245-residue polypeptide: 1-(5-phosphoribosyl)-5-[(5-phosphoribosylamino)methylideneamino] imidazole-4-carboxamide isomerase (245 aa).

Residue D11 is the Proton acceptor of the active site. D132 acts as the Proton donor in catalysis.

The protein belongs to the HisA/HisF family.

The protein localises to the cytoplasm. The catalysed reaction is 1-(5-phospho-beta-D-ribosyl)-5-[(5-phospho-beta-D-ribosylamino)methylideneamino]imidazole-4-carboxamide = 5-[(5-phospho-1-deoxy-D-ribulos-1-ylimino)methylamino]-1-(5-phospho-beta-D-ribosyl)imidazole-4-carboxamide. The protein operates within amino-acid biosynthesis; L-histidine biosynthesis; L-histidine from 5-phospho-alpha-D-ribose 1-diphosphate: step 4/9. The sequence is that of 1-(5-phosphoribosyl)-5-[(5-phosphoribosylamino)methylideneamino] imidazole-4-carboxamide isomerase from Geobacillus thermodenitrificans (strain NG80-2).